We begin with the raw amino-acid sequence, 205 residues long: Meiotic nuclear division protein 1 homolog (205 aa).

Ser2 is modified (N-acetylserine). Residues 83 to 173 (KRKLEALNSQ…EAANRWTDNI (91 aa)) adopt a coiled-coil conformation.

It belongs to the MND1 family. As to quaternary structure, heterodimer with PSMC3IP/HOP2. MND1-PSMC3IP interacts with DMC1 and RAD51 and binds to ssDNA and dsDNA showing no preference for either form of DNA.

The protein localises to the nucleus. Functionally, required for proper homologous chromosome pairing and efficient cross-over and intragenic recombination during meiosis. Stimulates both DMC1- and RAD51-mediated homologous strand assimilation, which is required for the resolution of meiotic double-strand breaks. This is Meiotic nuclear division protein 1 homolog from Mus musculus (Mouse).